Here is a 96-residue protein sequence, read N- to C-terminus: RxLR effector protein PITG_11507 (96 aa).

Residues 1–19 (MRLSFIIVAVSLLAGGSGA) form the signal peptide. Residues 27–59 (SDVLTSRGTNEGARTGKRSLRYDSNVERTGEED) form a disordered region. Residues 44–59 (RSLRYDSNVERTGEED) carry the RxLR-dEER motif. The segment covering 46-55 (LRYDSNVERT) has biased composition (basic and acidic residues).

The protein belongs to the RxLR effector family.

It localises to the secreted. The protein localises to the host nucleus. Its subcellular location is the host cytoplasm. Effector that enhances P.infestans colonization of Nicotiana benthamiana leaves. In Phytophthora infestans (strain T30-4) (Potato late blight agent), this protein is RxLR effector protein PITG_11507.